A 401-amino-acid chain; its full sequence is Probable 2,3-bisphosphoglycerate-independent phosphoglycerate mutase (401 aa).

The protein belongs to the BPG-independent phosphoglycerate mutase family. A-PGAM subfamily.

It catalyses the reaction (2R)-2-phosphoglycerate = (2R)-3-phosphoglycerate. Its pathway is carbohydrate degradation; glycolysis; pyruvate from D-glyceraldehyde 3-phosphate: step 3/5. Its function is as follows. Catalyzes the interconversion of 2-phosphoglycerate and 3-phosphoglycerate. In Thermotoga petrophila (strain ATCC BAA-488 / DSM 13995 / JCM 10881 / RKU-1), this protein is Probable 2,3-bisphosphoglycerate-independent phosphoglycerate mutase.